Reading from the N-terminus, the 1075-residue chain is DNA-directed RNA polymerase subunit beta (1075 aa).

Belongs to the RNA polymerase beta chain family. As to quaternary structure, in plastids the minimal PEP RNA polymerase catalytic core is composed of four subunits: alpha, beta, beta', and beta''. When a (nuclear-encoded) sigma factor is associated with the core the holoenzyme is formed, which can initiate transcription.

Its subcellular location is the plastid. The protein resides in the chloroplast. It carries out the reaction RNA(n) + a ribonucleoside 5'-triphosphate = RNA(n+1) + diphosphate. In terms of biological role, DNA-dependent RNA polymerase catalyzes the transcription of DNA into RNA using the four ribonucleoside triphosphates as substrates. This is DNA-directed RNA polymerase subunit beta from Oryza sativa (Rice).